The sequence spans 444 residues: N-succinylarginine dihydrolase (444 aa).

Residues 19-28, Asn-110, and 137-138 contribute to the substrate site; these read SGLSVGNIAS and HR. Glu-174 is an active-site residue. Substrate is bound at residue Arg-214. Residue His-250 is part of the active site. Asp-252 and Asn-362 together coordinate substrate. Cys-368 (nucleophile) is an active-site residue.

Belongs to the succinylarginine dihydrolase family. Homodimer.

The enzyme catalyses N(2)-succinyl-L-arginine + 2 H2O + 2 H(+) = N(2)-succinyl-L-ornithine + 2 NH4(+) + CO2. Its pathway is amino-acid degradation; L-arginine degradation via AST pathway; L-glutamate and succinate from L-arginine: step 2/5. Its function is as follows. Catalyzes the hydrolysis of N(2)-succinylarginine into N(2)-succinylornithine, ammonia and CO(2). The protein is N-succinylarginine dihydrolase of Aliivibrio salmonicida (strain LFI1238) (Vibrio salmonicida (strain LFI1238)).